The sequence spans 273 residues: 4-hydroxy-tetrahydrodipicolinate reductase (273 aa).

12-17 (GAAGRM) lines the NAD(+) pocket. Arg39 is a binding site for NADP(+). Residues 102–104 (GTT) and 126–129 (AANF) each bind NAD(+). The active-site Proton donor/acceptor is the His159. His160 provides a ligand contact to (S)-2,3,4,5-tetrahydrodipicolinate. Residue Lys163 is the Proton donor of the active site. 169–170 (GT) lines the (S)-2,3,4,5-tetrahydrodipicolinate pocket.

This sequence belongs to the DapB family. Homotetramer.

Its subcellular location is the cytoplasm. It catalyses the reaction (S)-2,3,4,5-tetrahydrodipicolinate + NAD(+) + H2O = (2S,4S)-4-hydroxy-2,3,4,5-tetrahydrodipicolinate + NADH + H(+). The catalysed reaction is (S)-2,3,4,5-tetrahydrodipicolinate + NADP(+) + H2O = (2S,4S)-4-hydroxy-2,3,4,5-tetrahydrodipicolinate + NADPH + H(+). Its pathway is amino-acid biosynthesis; L-lysine biosynthesis via DAP pathway; (S)-tetrahydrodipicolinate from L-aspartate: step 4/4. Its function is as follows. Catalyzes the conversion of 4-hydroxy-tetrahydrodipicolinate (HTPA) to tetrahydrodipicolinate. In Erwinia tasmaniensis (strain DSM 17950 / CFBP 7177 / CIP 109463 / NCPPB 4357 / Et1/99), this protein is 4-hydroxy-tetrahydrodipicolinate reductase.